Here is a 273-residue protein sequence, read N- to C-terminus: Eukaryotic translation initiation factor 3 subunit J (273 aa).

Residues methionine 1–glutamate 158 are disordered. The span at aspartate 34 to valine 54 shows a compositional bias: acidic residues. A coiled-coil region spans residues glutamate 50 to serine 97. Basic and acidic residues predominate over residues glutamate 55 to alanine 75. Positions glutamate 95–threonine 104 are enriched in acidic residues. Positions glutamate 105–aspartate 126 are enriched in basic and acidic residues.

Belongs to the eIF-3 subunit J family. As to quaternary structure, component of the eukaryotic translation initiation factor 3 (eIF-3) complex.

Its subcellular location is the cytoplasm. Component of the eukaryotic translation initiation factor 3 (eIF-3) complex, which is involved in protein synthesis of a specialized repertoire of mRNAs and, together with other initiation factors, stimulates binding of mRNA and methionyl-tRNAi to the 40S ribosome. The eIF-3 complex specifically targets and initiates translation of a subset of mRNAs involved in cell proliferation. This Pyricularia oryzae (strain 70-15 / ATCC MYA-4617 / FGSC 8958) (Rice blast fungus) protein is Eukaryotic translation initiation factor 3 subunit J.